A 245-amino-acid chain; its full sequence is Orotidine 5'-phosphate decarboxylase (245 aa).

Residues aspartate 22, lysine 44, 71 to 80, threonine 131, arginine 192, glutamine 201, glycine 221, and arginine 222 each bind substrate; that span reads DLKFHDIPNT. Lysine 73 (proton donor) is an active-site residue.

The protein belongs to the OMP decarboxylase family. Type 1 subfamily. Homodimer.

It catalyses the reaction orotidine 5'-phosphate + H(+) = UMP + CO2. It participates in pyrimidine metabolism; UMP biosynthesis via de novo pathway; UMP from orotate: step 2/2. Its function is as follows. Catalyzes the decarboxylation of orotidine 5'-monophosphate (OMP) to uridine 5'-monophosphate (UMP). This Shigella flexneri protein is Orotidine 5'-phosphate decarboxylase.